The primary structure comprises 434 residues: Probable exopolygalacturonase A (434 aa).

The N-terminal stretch at 1–19 is a signal peptide; the sequence is MKLPILVTLFITLPALCVS. N46, N57, N106, N199, and N207 each carry an N-linked (GlcNAc...) asparagine glycan. Residues 232–253 form a PbH1 1 repeat; that stretch reads SSNIVIQDSRIVNTDDCVSFKP. Residue D246 is the Proton donor of the active site. Cysteines 248 and 265 form a disulfide. N254 carries N-linked (GlcNAc...) asparagine glycosylation. The stretch at 255–275 is one PbH1 2 repeat; the sequence is STQIVIQNLDCTGSHGISVGS. H269 is a catalytic residue. N-linked (GlcNAc...) asparagine glycans are attached at residues N293, N329, and N354. Residues C392 and C398 are joined by a disulfide bond. N-linked (GlcNAc...) asparagine glycosylation is present at N400.

Belongs to the glycosyl hydrolase 28 family.

The protein localises to the secreted. The catalysed reaction is [(1-&gt;4)-alpha-D-galacturonosyl](n) + H2O = alpha-D-galacturonate + [(1-&gt;4)-alpha-D-galacturonosyl](n-1). Functionally, specific in hydrolyzing the terminal glycosidic bond of polygalacturonic acid and oligogalacturonates. The chain is Probable exopolygalacturonase A (pgxA) from Aspergillus niger (strain ATCC MYA-4892 / CBS 513.88 / FGSC A1513).